We begin with the raw amino-acid sequence, 207 residues long: Ribonuclease HII (207 aa).

The RNase H type-2 domain maps to 18-206 (EFIVGVDEVG…VKNILQLLEK (189 aa)). 3 residues coordinate a divalent metal cation: Asp24, Glu25, and Asp115.

The protein belongs to the RNase HII family. Requires Mn(2+) as cofactor. Mg(2+) is required as a cofactor.

It is found in the cytoplasm. It catalyses the reaction Endonucleolytic cleavage to 5'-phosphomonoester.. Functionally, endonuclease that specifically degrades the RNA of RNA-DNA hybrids. The polypeptide is Ribonuclease HII (Hydrogenovibrio crunogenus (strain DSM 25203 / XCL-2) (Thiomicrospira crunogena)).